The primary structure comprises 359 residues: Histidinol-phosphate aminotransferase (359 aa).

N6-(pyridoxal phosphate)lysine is present on K217.

Belongs to the class-II pyridoxal-phosphate-dependent aminotransferase family. Histidinol-phosphate aminotransferase subfamily. As to quaternary structure, homodimer. Requires pyridoxal 5'-phosphate as cofactor.

The catalysed reaction is L-histidinol phosphate + 2-oxoglutarate = 3-(imidazol-4-yl)-2-oxopropyl phosphate + L-glutamate. The protein operates within amino-acid biosynthesis; L-histidine biosynthesis; L-histidine from 5-phospho-alpha-D-ribose 1-diphosphate: step 7/9. This chain is Histidinol-phosphate aminotransferase, found in Salmonella arizonae (strain ATCC BAA-731 / CDC346-86 / RSK2980).